A 1710-amino-acid chain; its full sequence is Ankyrin repeat domain-containing protein 26 (1710 aa).

The disordered stretch occupies residues 1–41; sequence MKKIFSKKGESPLGSFARRQRSSAGGGGEPGEGAYSQPGYH. 2 positions are modified to phosphoserine: S11 and S15. ANK repeat units follow at residues 45-75, 79-108, 112-141, 145-174, and 178-207; these read RDLG…GLND, MNRT…QLNV, ENRT…DPNL, HGNT…NIEA, and DDLT…NVNA. The disordered stretch occupies residues 222-274; it reads KEERIPKHSSQNSNSVDESSEDSLSRLSGKPGVDDSWPTSDDEDLNFDTKNVP. Phosphoserine is present on residues S241, S261, S489, and S530. The tract at residues 504–630 is disordered; sequence DSVPNKAGGM…EKRTSKESVN (127 aa). Residues 529-566 adopt a coiled-coil conformation; it reads ASEEEQEREGSENNQPQVEEERKKHRNNEMEVSANIHD. A compositionally biased stretch (acidic residues) spans 569-580; that stretch reads TDDAEDDDDDDG. Composition is skewed to basic and acidic residues over residues 586 to 602 and 613 to 626; these read KSGE…ENKE and KEVK…RTSK. Residue S631 is modified to Phosphoserine. A compositionally biased stretch (acidic residues) spans 650–660; it reads DSSLSEIDEDE. A disordered region spans residues 650-698; the sequence is DSSLSEIDEDEGRPTKKTSNEKNKVKNQIQSMDDVDDLTQSSETASEDC. Residues 661 to 673 show a composition bias toward basic and acidic residues; the sequence is GRPTKKTSNEKNK. Coiled coils occupy residues 743 to 873, 905 to 1472, 1517 to 1587, and 1649 to 1674; these read KNHC…NARM, EEEK…MVEL, NNFA…NTKL, and LSKM…LESG. The segment at 892–912 is disordered; the sequence is AQKKMNSENSHSHEEEKDLSH.

As to quaternary structure, interacts with TRIO. Interacts with GPS2. Interacts with CCDC85B. Interacts with HMMR.

Functionally, acts as a regulator of adipogenesis. Involved in the regulation of the feeding behavior. This Homo sapiens (Human) protein is Ankyrin repeat domain-containing protein 26.